Reading from the N-terminus, the 445-residue chain is Tryptophan 5-hydroxylase 1 (445 aa).

In terms of domain architecture, ACT spans 19–94 (AIIFSLKNEV…SIVSMNPTEH (76 aa)). Ser-58 bears the Phosphoserine; by PKA mark. Residues Tyr-236, Arg-258, and Thr-266 each contribute to the L-tryptophan site. The Fe cation site is built by His-273, His-278, and Glu-318. Ser-337 and Ile-367 together coordinate L-tryptophan.

The protein belongs to the biopterin-dependent aromatic amino acid hydroxylase family. Homotetramer. Requires Fe(2+) as cofactor.

The enzyme catalyses (6R)-L-erythro-5,6,7,8-tetrahydrobiopterin + L-tryptophan + O2 = 5-hydroxy-L-tryptophan + (4aS,6R)-4a-hydroxy-L-erythro-5,6,7,8-tetrahydrobiopterin. It participates in aromatic compound metabolism; serotonin biosynthesis; serotonin from L-tryptophan: step 1/2. Its function is as follows. Oxidizes L-tryptophan to 5-hydroxy-l-tryptophan in the rate-determining step of serotonin biosynthesis. In Gallus gallus (Chicken), this protein is Tryptophan 5-hydroxylase 1 (TPH1).